The sequence spans 257 residues: 5'-nucleotidase SurE (257 aa).

Residues Asp-9, Asp-10, Ser-40, and Asn-92 each contribute to the a divalent metal cation site.

The protein belongs to the SurE nucleotidase family. Requires a divalent metal cation as cofactor.

It localises to the cytoplasm. It catalyses the reaction a ribonucleoside 5'-phosphate + H2O = a ribonucleoside + phosphate. Nucleotidase that shows phosphatase activity on nucleoside 5'-monophosphates. The chain is 5'-nucleotidase SurE from Alkalilimnicola ehrlichii (strain ATCC BAA-1101 / DSM 17681 / MLHE-1).